Consider the following 357-residue polypeptide: uncharacterized protein (357 aa).

A signal peptide spans 1–19 (MKRILSFIFIILFFNSSYA).

This is an uncharacterized protein from Rickettsia prowazekii (strain Madrid E).